A 96-amino-acid polypeptide reads, in one-letter code: MALERSDVEKIAHLARLGLSEADLPRTTETLNNILGLIDQMQAVDTSGVEPLAHPLEATQRLRPDAVTETDHRDAYQTIAPAVEEGLYLVPKVIES.

It belongs to the GatC family. In terms of assembly, heterotrimer of A, B and C subunits.

It carries out the reaction L-glutamyl-tRNA(Gln) + L-glutamine + ATP + H2O = L-glutaminyl-tRNA(Gln) + L-glutamate + ADP + phosphate + H(+). The enzyme catalyses L-aspartyl-tRNA(Asn) + L-glutamine + ATP + H2O = L-asparaginyl-tRNA(Asn) + L-glutamate + ADP + phosphate + 2 H(+). Functionally, allows the formation of correctly charged Asn-tRNA(Asn) or Gln-tRNA(Gln) through the transamidation of misacylated Asp-tRNA(Asn) or Glu-tRNA(Gln) in organisms which lack either or both of asparaginyl-tRNA or glutaminyl-tRNA synthetases. The reaction takes place in the presence of glutamine and ATP through an activated phospho-Asp-tRNA(Asn) or phospho-Glu-tRNA(Gln). This Pseudomonas aeruginosa (strain ATCC 15692 / DSM 22644 / CIP 104116 / JCM 14847 / LMG 12228 / 1C / PRS 101 / PAO1) protein is Glutamyl-tRNA(Gln) amidotransferase subunit C.